A 175-amino-acid polypeptide reads, in one-letter code: MVSLKDSHFDLFHLPARFALDEPTLDAAYRAVQSQVHPDRFAAAGDAQKRIAMQWATRANEAYQTLRDPLKRATYLLHLRGVDVGAENNTAMEPAFLMQQMEWRERIEDAAGAKNVDALDALLAELRDERRARLAKLGALLDSGSDQGAAEAVRQLMFVERVSAEIGAQIERLEH.

The region spanning 7–79 is the J domain; sequence SHFDLFHLPA…LKRATYLLHL (73 aa).

Belongs to the HscB family. Interacts with HscA and stimulates its ATPase activity.

Co-chaperone involved in the maturation of iron-sulfur cluster-containing proteins. Seems to help targeting proteins to be folded toward HscA. The sequence is that of Co-chaperone protein HscB homolog from Burkholderia mallei (strain ATCC 23344).